A 144-amino-acid polypeptide reads, in one-letter code: Small ribosomal subunit protein uS12 (144 aa).

The residue at position 103 (Asp-103) is a 3-methylthioaspartic acid. Residues 121–144 form a disordered region; the sequence is VANRKQGRSKYGTKKASAVPAKKK.

This sequence belongs to the universal ribosomal protein uS12 family. As to quaternary structure, part of the 30S ribosomal subunit. Contacts proteins S8 and S17. May interact with IF1 in the 30S initiation complex.

Functionally, with S4 and S5 plays an important role in translational accuracy. Its function is as follows. Interacts with and stabilizes bases of the 16S rRNA that are involved in tRNA selection in the A site and with the mRNA backbone. Located at the interface of the 30S and 50S subunits, it traverses the body of the 30S subunit contacting proteins on the other side and probably holding the rRNA structure together. The combined cluster of proteins S8, S12 and S17 appears to hold together the shoulder and platform of the 30S subunit. This Roseiflexus castenholzii (strain DSM 13941 / HLO8) protein is Small ribosomal subunit protein uS12.